The primary structure comprises 252 residues: MAARKAGLIALFDVDGTLTAPRKESTPQMLKFMQELRKVVTVGVVGGSDLVKISEQLGNTVTNDYDYVFSENGLVAHKDGKLIGKQSLKSHLGDEKLKEFINFTLHYIADLDIPIKRGTFIEFRSGMLNVSPIGRNCSQEERDEFEKYDKVQKIRETMVSVLREKFAHFNLTFSIGGQISFDVFPQGWDKTYCLRYLEEFNEIHFFGDKTYKGGNDHEIYESERTVGHTVTSPEETLKQCSVLFLGKDNGSS.

D13 functions as the Nucleophile in the catalytic mechanism. Positions 13 and 15 each coordinate Mg(2+). Catalysis depends on D15, which acts as the Proton donor/acceptor. 6 residues coordinate alpha-D-mannose 1-phosphate: R22, R124, R135, R142, S180, and D182. Mg(2+) is bound by residues D208, Y220, and T225.

The protein belongs to the eukaryotic PMM family. Homodimer. The cofactor is Mg(2+).

The protein localises to the cytoplasm. It catalyses the reaction alpha-D-mannose 1-phosphate = D-mannose 6-phosphate. The protein operates within nucleotide-sugar biosynthesis; GDP-alpha-D-mannose biosynthesis; alpha-D-mannose 1-phosphate from D-fructose 6-phosphate: step 2/2. Catalyzes the interconversion of mannose-6-phosphate to mannose-1-phosphate, the precursor for the synthesis of GDP-mannose. GDP-mannose is an essential sugar nucleotide for the synthesis of D-mannose-containing cell wall polysaccharides (galactomannans and glucomannans), glycolipids, glycoproteins and the antioxidant L-ascorbate. Can complement the yeast temperature-sensitive mutant sec53-6. This chain is Phosphomannomutase, found in Solanum lycopersicum (Tomato).